The chain runs to 424 residues: CinA-like protein (424 aa).

The protein belongs to the CinA family.

This Prochlorococcus marinus (strain AS9601) protein is CinA-like protein.